The sequence spans 225 residues: Uracil-DNA glycosylase (225 aa).

Asp65 (proton acceptor) is an active-site residue.

The protein belongs to the uracil-DNA glycosylase (UDG) superfamily. UNG family.

It localises to the cytoplasm. It carries out the reaction Hydrolyzes single-stranded DNA or mismatched double-stranded DNA and polynucleotides, releasing free uracil.. Its function is as follows. Excises uracil residues from the DNA which can arise as a result of misincorporation of dUMP residues by DNA polymerase or due to deamination of cytosine. The sequence is that of Uracil-DNA glycosylase from Bacillus cereus (strain ZK / E33L).